The following is a 183-amino-acid chain: Putative manganese efflux pump MntP 1 (183 aa).

A run of 6 helical transmembrane segments spans residues 6 to 26, 36 to 56, 64 to 84, 100 to 120, 130 to 150, and 158 to 178; these read LFLL…CIGI, IIFV…GGYI, IVPI…ILMI, IMYL…GFTT, LFMS…LGII, and ISII…LFGL.

Belongs to the MntP (TC 9.B.29) family.

Its subcellular location is the cell membrane. Probably functions as a manganese efflux pump. The polypeptide is Putative manganese efflux pump MntP 1 (Clostridium botulinum (strain Langeland / NCTC 10281 / Type F)).